A 339-amino-acid chain; its full sequence is Biotin synthase (339 aa).

Residues Asn-55–Arg-282 form the Radical SAM core domain. Residues Cys-70, Cys-74, and Cys-77 each coordinate [4Fe-4S] cluster. Residues Cys-114, Cys-145, Cys-205, and Arg-277 each contribute to the [2Fe-2S] cluster site.

It belongs to the radical SAM superfamily. Biotin synthase family. In terms of assembly, homodimer. The cofactor is [4Fe-4S] cluster. It depends on [2Fe-2S] cluster as a cofactor.

The enzyme catalyses (4R,5S)-dethiobiotin + (sulfur carrier)-SH + 2 reduced [2Fe-2S]-[ferredoxin] + 2 S-adenosyl-L-methionine = (sulfur carrier)-H + biotin + 2 5'-deoxyadenosine + 2 L-methionine + 2 oxidized [2Fe-2S]-[ferredoxin]. It participates in cofactor biosynthesis; biotin biosynthesis; biotin from 7,8-diaminononanoate: step 2/2. Catalyzes the conversion of dethiobiotin (DTB) to biotin by the insertion of a sulfur atom into dethiobiotin via a radical-based mechanism. This Burkholderia cenocepacia (strain ATCC BAA-245 / DSM 16553 / LMG 16656 / NCTC 13227 / J2315 / CF5610) (Burkholderia cepacia (strain J2315)) protein is Biotin synthase.